The chain runs to 496 residues: Galactose-1-phosphate uridylyltransferase (496 aa).

This sequence belongs to the galactose-1-phosphate uridylyltransferase type 2 family.

It is found in the cytoplasm. It catalyses the reaction alpha-D-galactose 1-phosphate + UDP-alpha-D-glucose = alpha-D-glucose 1-phosphate + UDP-alpha-D-galactose. Its pathway is carbohydrate metabolism; galactose metabolism. In Staphylococcus saprophyticus subsp. saprophyticus (strain ATCC 15305 / DSM 20229 / NCIMB 8711 / NCTC 7292 / S-41), this protein is Galactose-1-phosphate uridylyltransferase.